The following is a 624-amino-acid chain: DNA mismatch repair protein MutL (624 aa).

The tract at residues Leu-416–Lys-436 is disordered.

The protein belongs to the DNA mismatch repair MutL/HexB family.

This protein is involved in the repair of mismatches in DNA. It is required for dam-dependent methyl-directed DNA mismatch repair. May act as a 'molecular matchmaker', a protein that promotes the formation of a stable complex between two or more DNA-binding proteins in an ATP-dependent manner without itself being part of a final effector complex. The protein is DNA mismatch repair protein MutL of Chlorobaculum tepidum (strain ATCC 49652 / DSM 12025 / NBRC 103806 / TLS) (Chlorobium tepidum).